A 30-amino-acid polypeptide reads, in one-letter code: U-actitoxin-Bcg2a (30 aa).

The cysteines at positions 7 and 27 are disulfide-linked.

The protein resides in the secreted. The protein localises to the nematocyst. Possible voltage-gated potassium channel (Kv) blocker. The sequence is that of U-actitoxin-Bcg2a from Bunodosoma cangicum (Sea anemone).